Here is a 98-residue protein sequence, read N- to C-terminus: NADH-ubiquinone oxidoreductase chain 4L (98 aa).

3 helical membrane-spanning segments follow: residues 1-21, 29-49, and 61-81; these read MTLI…GLLM, ALLC…LTIL, and IILL…LVMV.

This sequence belongs to the complex I subunit 4L family. In terms of assembly, core subunit of respiratory chain NADH dehydrogenase (Complex I) which is composed of 45 different subunits.

The protein localises to the mitochondrion inner membrane. The enzyme catalyses a ubiquinone + NADH + 5 H(+)(in) = a ubiquinol + NAD(+) + 4 H(+)(out). Its function is as follows. Core subunit of the mitochondrial membrane respiratory chain NADH dehydrogenase (Complex I) which catalyzes electron transfer from NADH through the respiratory chain, using ubiquinone as an electron acceptor. Part of the enzyme membrane arm which is embedded in the lipid bilayer and involved in proton translocation. In Balaenoptera physalus (Fin whale), this protein is NADH-ubiquinone oxidoreductase chain 4L (MT-ND4L).